The primary structure comprises 612 residues: uncharacterized protein (612 aa).

A coiled-coil region spans residues 39 to 100 (ERDHNLWEIE…KNISVKDLDE (62 aa)). Positions 219-241 (PLSSGESLPKKEEEVTKSPSFTL) are disordered. 7 WD repeats span residues 286-325 (TSTQ…NDNS), 337-376 (GHEG…TSDS), 389-432 (GHED…FKIR), 434-470 (DSKQ…LVSQ), 483-523 (AVKD…LLAE), 526-565 (ISKV…STLE), and 574-612 (EEIT…KYLP).

It localises to the cytoplasm. This is an uncharacterized protein from Schizosaccharomyces pombe (strain 972 / ATCC 24843) (Fission yeast).